The sequence spans 380 residues: 3-dehydroquinate synthase (380 aa).

Residues 118-122 (GVIGD), 142-143 (TS), lysine 155, and lysine 164 each bind NAD(+). The Zn(2+) site is built by glutamate 197, histidine 259, and histidine 278.

It belongs to the sugar phosphate cyclases superfamily. Dehydroquinate synthase family. The cofactor is Co(2+). Zn(2+) is required as a cofactor. It depends on NAD(+) as a cofactor.

The protein localises to the cytoplasm. The enzyme catalyses 7-phospho-2-dehydro-3-deoxy-D-arabino-heptonate = 3-dehydroquinate + phosphate. It participates in metabolic intermediate biosynthesis; chorismate biosynthesis; chorismate from D-erythrose 4-phosphate and phosphoenolpyruvate: step 2/7. Its function is as follows. Catalyzes the conversion of 3-deoxy-D-arabino-heptulosonate 7-phosphate (DAHP) to dehydroquinate (DHQ). In Sinorhizobium medicae (strain WSM419) (Ensifer medicae), this protein is 3-dehydroquinate synthase.